The chain runs to 638 residues: Asparagine--tRNA ligase, cytoplasmic 2 (638 aa).

Residues 1–16 (MESHGKTHQKEHDNDL) are compositionally biased toward basic and acidic residues. Disordered regions lie at residues 1 to 23 (MESH…PITL) and 62 to 87 (VKKN…DQAH).

It belongs to the class-II aminoacyl-tRNA synthetase family.

It is found in the cytoplasm. The protein localises to the cytosol. It catalyses the reaction tRNA(Asn) + L-asparagine + ATP = L-asparaginyl-tRNA(Asn) + AMP + diphosphate + H(+). This chain is Asparagine--tRNA ligase, cytoplasmic 2, found in Arabidopsis thaliana (Mouse-ear cress).